Consider the following 355-residue polypeptide: 3-isopropylmalate dehydrogenase (355 aa).

Arg90, Arg100, Arg128, and Asp222 together coordinate substrate. Asp222, Asp246, and Asp250 together coordinate Mg(2+). Residue 280–292 coordinates NAD(+); sequence GSAPDIAGKGVAN.

Belongs to the isocitrate and isopropylmalate dehydrogenases family. LeuB type 1 subfamily. As to quaternary structure, homodimer. Mg(2+) is required as a cofactor. Mn(2+) serves as cofactor.

It localises to the cytoplasm. The catalysed reaction is (2R,3S)-3-isopropylmalate + NAD(+) = 4-methyl-2-oxopentanoate + CO2 + NADH. Its pathway is amino-acid biosynthesis; L-leucine biosynthesis; L-leucine from 3-methyl-2-oxobutanoate: step 3/4. In terms of biological role, catalyzes the oxidation of 3-carboxy-2-hydroxy-4-methylpentanoate (3-isopropylmalate) to 3-carboxy-4-methyl-2-oxopentanoate. The product decarboxylates to 4-methyl-2 oxopentanoate. The polypeptide is 3-isopropylmalate dehydrogenase (Cupriavidus pinatubonensis (strain JMP 134 / LMG 1197) (Cupriavidus necator (strain JMP 134))).